We begin with the raw amino-acid sequence, 193 residues long: Probable chemoreceptor glutamine deamidase CheD 1 (193 aa).

Residues 1–26 (MPHTPPAYPAASADHRPPSSPPAEPA) form a disordered region.

It belongs to the CheD family.

The enzyme catalyses L-glutaminyl-[protein] + H2O = L-glutamyl-[protein] + NH4(+). Probably deamidates glutamine residues to glutamate on methyl-accepting chemotaxis receptors (MCPs), playing an important role in chemotaxis. The protein is Probable chemoreceptor glutamine deamidase CheD 1 of Chromobacterium violaceum (strain ATCC 12472 / DSM 30191 / JCM 1249 / CCUG 213 / NBRC 12614 / NCIMB 9131 / NCTC 9757 / MK).